The chain runs to 2527 residues: Highly reducing polyketide synthase poxF (2527 aa).

One can recognise a Ketosynthase family 3 (KS3) domain in the interval 20–445; it reads VMPIAIIGMA…GANAHVIVES (426 aa). Active-site for beta-ketoacyl synthase activity residues include C193, H328, and H368. The interval 560 to 882 is malonyl-CoA:ACP transacylase (MAT) domain; the sequence is VFTGQGAQWF…TYASCLSRGQ (323 aa). The segment at 951–1086 is N-terminal hotdog fold; it reads HDLLGVPAAG…GLCCTPSPAQ (136 aa). The interval 951 to 1243 is dehydratase (DH) domain; it reads HDLLGVPAAG…SVRVINNAGT (293 aa). The region spanning 951–1270 is the PKS/mFAS DH domain; sequence HDLLGVPAAG…CQSLGSSAVV (320 aa). H983 acts as the Proton acceptor; for dehydratase activity in catalysis. The interval 1108–1270 is C-terminal hotdog fold; sequence AWRILNPADT…CQSLGSSAVV (163 aa). Catalysis depends on D1174, which acts as the Proton donor; for dehydratase activity. The interval 1406 to 1587 is methyltransferase (CMet) domain; it reads EDQAEWSSVS…RLLAKAGFEP (182 aa). Positions 1823–2137 are enoyl reductase (ER) (ER) domain; sequence GLLNSLVFTE…TGKHMGKIVL (315 aa). Residues 2162 to 2339 are ketoreductase (KR) domain; sequence TYLLVGGVGG…AVSIDLGMVS (178 aa). The 78-residue stretch at 2445-2522 folds into the Carrier domain; the sequence is EVTTLIQSAL…GLAGQMAKKS (78 aa). S2482 carries the O-(pantetheine 4'-phosphoryl)serine modification.

The protein operates within secondary metabolite biosynthesis. Highly reducing polyketide synthase; part of the gene cluster that mediates the biosynthesis of oxaleimides, cytotoxic compounds containing an unusual disubstituted succinimide moiety. The first step of the pathway is provided by the HR-PKS poxF that serves in a new mode of collaborative biosynthesis with the PKS-NRPS poxE, by providing the olefin containing amino acid substrate via the synthesis of an ACP-bound dec-4-enoate. The cytochrome P450 monooxygenase poxM-catalyzed oxidation at the alpha-position creates the enzyme-bound 2-hydroxydec-4-enoyl-ACP thioester, which may be prone to spontaneous hydrolysis to yield 2-hydroxydec-4-enoic acid due to increased electrophilicity of the carbonyl. 2-hydroxydec-4-enoic acid can then be further oxidized by poxM to yield the alpha-ketoacid 2-oxodec-4-enoicacid, which is reductively aminated by the aminotransferase poxL to yield (S,E)-2-aminodec-4-enoic acid. The Hybrid PKS-NRPS synthetase poxE then performs condensation between the octaketide product of its PKS modules and the amino group of (S,E)-2-aminodec-4-enoic acid which is activated and incorporated by the adenylation domain. The resulting aminoacyl product can be cyclized by the Diels-Alderase PoxQ and reductively released by the reductive (R) domain of poxE to yield an aldehyde intermediate. The released aldehyde is then substrate for a Knoevenagel condensation by the hydrolyase poxO followed by an oxidation at the 5-position of the pyrrolidone ring. The presence of the olefin from the amino acid building block allows for migration of the substituted allyl group to occur. This allylic transposition reaction takes place in a conjugate addition, semipinacol-like fashion to yield a succinimide intermediate. Iterative two-electron oxidations of the C7 methyl of the succinimide intermediate to the carboxylic acid can be catalyzed by one of two remaining cytochrome P450 monooxygenasess poxC or poxD to yield oxaleimide A. Subsequent oxidation yields the maleimide scaffold oxaleimide I. Both oxaleimide A and oxaleimide I can undergo oxidative modifications in the decalin ring to yield the series of products oxaleimides B to H. The chain is Highly reducing polyketide synthase poxF from Penicillium oxalicum.